Reading from the N-terminus, the 410-residue chain is WD repeat and FYVE domain-containing protein 1 (410 aa).

6 WD repeats span residues 22-61 (GHQD…QYWP), 66-105 (TMAS…NKMN), 112-150 (AHQN…NMLG), 153-192 (FFTS…CSVI), 197-236 (GHEG…GRTL), and 240-279 (GHHD…EEAP). Residues 281-352 (WLESDSCQKC…VCDSCYDSIK (72 aa)) form an FYVE-type zinc finger. Residues cysteine 287, cysteine 290, cysteine 314, cysteine 317, cysteine 322, cysteine 325, cysteine 344, and cysteine 347 each contribute to the Zn(2+) site. A WD 7 repeat occupies 364-403 (EGKHNISHMSMDIARGLMVTCGTDRIVKIWDMTPVVGCSL). Serine 408 bears the Phosphoserine mark.

As to quaternary structure, binds PtdIns3P in vitro with high specificity over other phosphoinositides. Interacts (via WD repeat 2) with tyrosine-phosphorylated TLR3 (via TIR domain) in response to poly(I:C). Interacts with TICAM1 in response to poly(I:C). Interacts with TLR4 in response to LPS.

Its subcellular location is the early endosome. Positively regulates TLR3- and TLR4-mediated signaling pathways by bridging the interaction between TLR3 or TLR4 and TICAM1. Promotes TLR3/4 ligand-induced activation of transcription factors IRF3 and NF-kappa-B, as well as the production of IFN-beta and inflammatory cytokines. The protein is WD repeat and FYVE domain-containing protein 1 (WDFY1) of Homo sapiens (Human).